A 273-amino-acid chain; its full sequence is 2,3,4,5-tetrahydropyridine-2,6-dicarboxylate N-succinyltransferase (273 aa).

Positions 104 and 141 each coordinate substrate.

This sequence belongs to the transferase hexapeptide repeat family. Homotrimer.

It is found in the cytoplasm. It carries out the reaction (S)-2,3,4,5-tetrahydrodipicolinate + succinyl-CoA + H2O = (S)-2-succinylamino-6-oxoheptanedioate + CoA. It participates in amino-acid biosynthesis; L-lysine biosynthesis via DAP pathway; LL-2,6-diaminopimelate from (S)-tetrahydrodipicolinate (succinylase route): step 1/3. This is 2,3,4,5-tetrahydropyridine-2,6-dicarboxylate N-succinyltransferase from Neisseria meningitidis serogroup A / serotype 4A (strain DSM 15465 / Z2491).